Reading from the N-terminus, the 75-residue chain is DNA-directed RNA polymerase subunit omega (75 aa).

The protein belongs to the RNA polymerase subunit omega family. In terms of assembly, the RNAP catalytic core consists of 2 alpha, 1 beta, 1 beta' and 1 omega subunit. When a sigma factor is associated with the core the holoenzyme is formed, which can initiate transcription.

The enzyme catalyses RNA(n) + a ribonucleoside 5'-triphosphate = RNA(n+1) + diphosphate. In terms of biological role, promotes RNA polymerase assembly. Latches the N- and C-terminal regions of the beta' subunit thereby facilitating its interaction with the beta and alpha subunits. The sequence is that of DNA-directed RNA polymerase subunit omega from Thermosipho melanesiensis (strain DSM 12029 / CIP 104789 / BI429).